We begin with the raw amino-acid sequence, 347 residues long: Dihydroorotase (347 aa).

Positions 14 and 16 each coordinate Zn(2+). Substrate-binding positions include 16 to 18 and N42; that span reads HLR. K100, H137, and H175 together coordinate Zn(2+). An N6-carboxylysine modification is found at K100. H137 is a substrate binding site. Position 220 (L220) interacts with substrate. D248 provides a ligand contact to Zn(2+). D248 is a catalytic residue. Substrate-binding residues include H252 and A264.

The protein belongs to the metallo-dependent hydrolases superfamily. DHOase family. Class II DHOase subfamily. As to quaternary structure, homodimer. Zn(2+) is required as a cofactor.

The enzyme catalyses (S)-dihydroorotate + H2O = N-carbamoyl-L-aspartate + H(+). It participates in pyrimidine metabolism; UMP biosynthesis via de novo pathway; (S)-dihydroorotate from bicarbonate: step 3/3. Its function is as follows. Catalyzes the reversible cyclization of carbamoyl aspartate to dihydroorotate. The polypeptide is Dihydroorotase (Pseudomonas syringae pv. tomato (strain ATCC BAA-871 / DC3000)).